We begin with the raw amino-acid sequence, 333 residues long: Nucleoid-associated protein PSPPH_1145 (333 aa).

The protein belongs to the YejK family.

The protein resides in the cytoplasm. It is found in the nucleoid. This chain is Nucleoid-associated protein PSPPH_1145, found in Pseudomonas savastanoi pv. phaseolicola (strain 1448A / Race 6) (Pseudomonas syringae pv. phaseolicola (strain 1448A / Race 6)).